The primary structure comprises 305 residues: Glutaminase (305 aa).

Substrate contacts are provided by serine 61, asparagine 113, glutamate 158, asparagine 165, tyrosine 189, tyrosine 241, and valine 259.

It belongs to the glutaminase family. As to quaternary structure, homotetramer.

It catalyses the reaction L-glutamine + H2O = L-glutamate + NH4(+). The polypeptide is Glutaminase (Clostridium botulinum (strain Loch Maree / Type A3)).